The chain runs to 462 residues: Chromosomal replication initiator protein DnaA (462 aa).

Residues 1 to 84 (MAVSLWQQCI…RFDIGSRPSA (84 aa)) form a domain I, interacts with DnaA modulators region. Residues 84–125 (AKKPSVPAPIAPTRVANTQTKATVGTTFNVQAEPMANANHRS) are domain II. The interval 126–342 (NINPSYQFDN…GALNRVIANA (217 aa)) is domain III, AAA+ region. Positions 170, 172, 173, and 174 each coordinate ATP. The interval 343 to 462 (NFTGRPITID…YANLIRTLSS (120 aa)) is domain IV, binds dsDNA.

It belongs to the DnaA family. In terms of assembly, oligomerizes as a right-handed, spiral filament on DNA at oriC.

The protein resides in the cytoplasm. In terms of biological role, plays an essential role in the initiation and regulation of chromosomal replication. ATP-DnaA binds to the origin of replication (oriC) to initiate formation of the DNA replication initiation complex once per cell cycle. Binds the DnaA box (a 9 base pair repeat at the origin) and separates the double-stranded (ds)DNA. Forms a right-handed helical filament on oriC DNA; dsDNA binds to the exterior of the filament while single-stranded (ss)DNA is stabiized in the filament's interior. The ATP-DnaA-oriC complex binds and stabilizes one strand of the AT-rich DNA unwinding element (DUE), permitting loading of DNA polymerase. After initiation quickly degrades to an ADP-DnaA complex that is not apt for DNA replication. Binds acidic phospholipids. The sequence is that of Chromosomal replication initiator protein DnaA from Shewanella baltica (strain OS195).